The sequence spans 571 residues: Chitin-inducible gibberellin-responsive protein 1 (571 aa).

Residues 61 to 77 (TNTPDNQSSTETISAQP) show a composition bias toward polar residues. Disordered stretches follow at residues 61-80 (TNTP…PISP) and 151-180 (QRSR…YPTA). A GRAS domain is found at 192–571 (ELREDPQIIV…RKLISASAWH (380 aa)). The segment at 199-259 (IIVKQLLTRC…VARHGNSGTN (61 aa)) is leucine repeat I (LRI). Residues 278 to 343 (MRILYNICPY…GGPPRVRITG (66 aa)) are VHIID. The VHIID signature appears at 309 to 313 (IHIID). Residues 359-391 (IVGKMLKSMSEEFKIPLEFTPLSVYATQVTKEM) form a leucine repeat II (LRII) region. A PFYRE region spans residues 400-494 (LSVNFTLQLH…QHCLAKDIVN (95 aa)). Residues 497–571 (ACEGKDRVER…RKLISASAWH (75 aa)) form an SAW region.

This sequence belongs to the GRAS family.

The protein localises to the nucleus. May play a regulatory role in the early step of oligosaccharide elicitor response, downstream of the membrane-associated high-affinity chitin-binding protein. The polypeptide is Chitin-inducible gibberellin-responsive protein 1 (CIGR1) (Oryza sativa subsp. japonica (Rice)).